The following is a 432-amino-acid chain: MGNNVVVLGTQWGDEGKGKIVDLLTERAKYVVRYQGGHNAGHTLVINGEKTVLHLIPSGILRENVTSIIGNGVVLSPAALMKEMKELEDRGIPVRERLLLSEACPLILDYHVALDNAREKARGAKAIGTTGRGIGPAYEDKVARRGLRVGDLFDKETFAEKLKEVMEYHNFQLVNYYKAEAVDYQKVLDDTMAVADILTSMVVDVSDLLDQARQRGDFVMFEGAQGTLLDIDHGTYPYVTSSNTTAGGVATGSGLGPRYVDYVLGILKAYSTRVGAGPFPTELFDETGEFLCKQGNEFGATTGRRRRTGWLDTVAVRRAVQLNSLSGFCLTKLDVLDGLKEVKLCVAYRMPDGREVTTTPLAADDWKGVEPIYETMPGWSESTFGVKDRSGLPQAALNYIKRIEELTGVPIDIISTGPDRTETMILRDPFDA.

Residues 13–19 (GDEGKGK) and 41–43 (GHT) each bind GTP. Asp14 functions as the Proton acceptor in the catalytic mechanism. Asp14 and Gly41 together coordinate Mg(2+). Residues 14–17 (DEGK), 39–42 (NAGH), Thr130, Arg144, Gln225, Thr240, and Arg304 contribute to the IMP site. The active-site Proton donor is the His42. 300–306 (ATTGRRR) is a binding site for substrate. GTP contacts are provided by residues Arg306, 332 to 334 (KLD), and 415 to 417 (STG).

The protein belongs to the adenylosuccinate synthetase family. In terms of assembly, homodimer. It depends on Mg(2+) as a cofactor.

The protein localises to the cytoplasm. It carries out the reaction IMP + L-aspartate + GTP = N(6)-(1,2-dicarboxyethyl)-AMP + GDP + phosphate + 2 H(+). The protein operates within purine metabolism; AMP biosynthesis via de novo pathway; AMP from IMP: step 1/2. Functionally, plays an important role in the de novo pathway of purine nucleotide biosynthesis. Catalyzes the first committed step in the biosynthesis of AMP from IMP. The protein is Adenylosuccinate synthetase of Escherichia coli (strain K12).